The sequence spans 47 residues: High light-inducible protein HliC (47 aa).

The Cytoplasmic segment spans residues 1 to 14 (MNNENSKFGFTAFA). The short motif at 15–20 (ENWNGR) is the Chlorophyll-binding motif element. Positions 15–36 (ENWNGRLAMIGFSSALILELVS) form a transmembrane segment. At 37–47 (GQGVLHFFGIL) the chain is on the lumenal, thylakoid side.

It belongs to the Hlip family. In terms of assembly, forms heterodimers with both HliA and HliB; these are associated with photosystem II (PSII) assembly intermediates containing CP47 (psbB). In the absence of CP47 (psbB) and HliD, forms a homooligomer in vivo that binds 2 chlorophyll a and 1 beta-carotenoid per monomer. Cofractionates in an approximately 50 kDa fraction the thylakoid membrane with HliD. Associated in vivo with monomeric PSII. Purified in several chlorophyll- and carotenoid-containing complexes, including photosystem II (PSII) assembly intermediate complex RCII* (iD1, D1, D2, PsbE, PsbF, PsbI, Ycf39, Ycf48, HliC and HliD) and the Ycf39-Hlip complex (Ycf39, HliC, HliD and pigments).

It is found in the cellular thylakoid membrane. In terms of biological role, forms a number of heteromers involved in photosystem II (PSII) assembly and/or repair under high light stress. Required for binding of chlorophyll and carotenoids by the Ycf39-Hlip complex. The Ycf39-Hlip complex binds D1 at an early stage of PSII assembly along with Ycf48, ribosomes and ChlG, the last enzyme in chlorophyll biosynthesis; it may be involved in chlorophyll reuse and delivery to D1 in the initial stages of PSII assembly. HliA-HliC and HliB-HliC heterodimers bind chlorophyll and carotenoids in a 1:0.6 ratio. Complexes bind mostly beta-carotenoid, but minor amounts of echinenone and beta-crytoxanthin are also detected. The complexes efficiently quench chlorophyll fluorescence, contributing to photoprotection. Deletion of 4 to 5 members of the Hlip family suggests the proteins are involved in regulation of chlorophyll biosynthesis, in stabilization of chlorophyll-binding proteins and/or in reuse of chlorophylls, and may regulate tetrapyrrole biosynthesis. Might bind chlorophyll and/or carotenoids in association with HliD (called the ScpBE pair). Its function is as follows. The Hlips might regulate tetrapyrrole biosynthesis, maybe at the level of aminolevulinic acid synthesis and probably stabilize PSII assembly intermediates. In Synechocystis sp. (strain ATCC 27184 / PCC 6803 / Kazusa), this protein is High light-inducible protein HliC (hliC).